The chain runs to 132 residues: Small ribosomal subunit protein uS8 (132 aa).

Belongs to the universal ribosomal protein uS8 family. As to quaternary structure, part of the 30S ribosomal subunit. Contacts proteins S5 and S12.

Its function is as follows. One of the primary rRNA binding proteins, it binds directly to 16S rRNA central domain where it helps coordinate assembly of the platform of the 30S subunit. In Clavibacter michiganensis subsp. michiganensis (strain NCPPB 382), this protein is Small ribosomal subunit protein uS8.